The chain runs to 431 residues: Forkhead box protein P3 (431 aa).

Residues 1–68 (MPNPRPGKPS…SSLNPMPPSQ (68 aa)) are disordered. A compositionally biased stretch (low complexity) spans 10–25 (SAPSLALGPSPGASPS). The residue at position 19 (Ser-19) is a Phosphoserine; by CDK2. Lys-31 bears the N6-acetyllysine mark. The Nuclear export signal signature appears at 68-76 (QLQLPTLPL). An LXXLL motif motif is present at residues 92 to 96 (LQALL). The essential for transcriptional repressor activity and for interaction with KAT5 and HDAC7 stretch occupies residues 106–190 (LSTVDAHART…STLSAMPQSS (85 aa)). Positions 149 to 199 (LPPGINVASLEWVSREPALLCTFPNPGAPRKDSTLSAMPQSSYPLLANGVC) are interaction with IKZF4. The segment at 197–222 (GVCKWPGCEKVFEEPEDFLKHCQADH) adopts a C2H2-type zinc-finger fold. The Nuclear export signal signature appears at 239 to 248 (VQSLEQQLVL). Residues 239 to 260 (VQSLEQQLVLEKEKLSAMQAHL) are leucine-zipper. Residues Lys-250 and Lys-252 each participate in a glycyl lysine isopeptide (Lys-Gly) (interchain with G-Cter in ubiquitin) cross-link. Lys-263 and Lys-268 each carry N6-acetyllysine; alternate. Glycyl lysine isopeptide (Lys-Gly) (interchain with G-Cter in ubiquitin); alternate cross-links involve residues Lys-263 and Lys-268. Positions 278–336 (GSCCIVAAGSQGSAVPAWSGPREAPDSLFAVRRHLWGSHGNSTFPEFLHNMDYFKFHNM) are interaction with RUNX1. The segment at residues 337-423 (RPPFTYATLI…RKKRSQRPSR (87 aa)) is a DNA-binding region (fork-head). A Glycyl lysine isopeptide (Lys-Gly) (interchain with G-Cter in ubiquitin) cross-link involves residue Lys-393. The short motif at 414 to 417 (RKKR) is the Nuclear localization signal element. The residue at position 418 (Ser-418) is a Phosphoserine. Residues 418 to 431 (SQRPSRCSNPTPGP) constitute a propeptide that is removed on maturation.

Homodimer. Dimerization is essential for its transcriptional regulator activity. Interacts with IKZF3. Interacts (via LXXLL motif) with RORA (via AF-2 motif). Interacts with HDAC9 in the absence of T-cell stimulation. Interacts with PPP1CA, PPP1CB, PPP1CG, KAT5, HDAC7, HSPA8, USP7, STUB1, HSPA1A/B, RUNX1, RUNX2, RUNX3, RELA, NFATC2, IKFZ4 and RORC. Post-translationally, phosphorylation at Ser-418 regulates its transcriptional repressor activity and consequently, regulatory T-cells (Treg) suppressive function. Phosphorylation by CDK2 negatively regulates its transcriptional activity and protein stability. Polyubiquitinated, leading to its proteasomal degradation in regulatory T-cells (Treg) which is mediated by STUB1 in a HSPA1A/B-dependent manner. Deubiquitinated by USP7 and USP44 leading to increase in protein stability. In terms of processing, acetylation on lysine residues stabilizes FOXP3 and promotes differentiation of T-cells into induced regulatory T-cells (iTregs) associated with suppressive functions. Acetylation is mediated by a coordinated action of KAT5 and EP300/p300 acetyltransferases: EP300/p300 is required to enhance KAT5 autoacetylation, promoting acetylation of FOXP3 by KAT5. Deacetylated by SIRT1. Post-translationally, undergoes proteolytic cleavage in activated regulatory T-cells (Treg), and can be cleaved at either the N- or C-terminal site, or at both sites.

Its subcellular location is the nucleus. It is found in the cytoplasm. Transcriptional regulator which is crucial for the development and inhibitory function of regulatory T-cells (Treg). Plays an essential role in maintaining homeostasis of the immune system by allowing the acquisition of full suppressive function and stability of the Treg lineage, and by directly modulating the expansion and function of conventional T-cells. Can act either as a transcriptional repressor or a transcriptional activator depending on its interactions with other transcription factors, histone acetylases and deacetylases. The suppressive activity of Treg involves the coordinate activation of many genes, including CTLA4 and TNFRSF18 by FOXP3 along with repression of genes encoding cytokines such as interleukin-2 (IL2) and interferon-gamma (IFNG). Inhibits cytokine production and T-cell effector function by repressing the activity of two key transcription factors, RELA and NFATC2. Mediates transcriptional repression of IL2 via its association with histone acetylase KAT5 and histone deacetylase HDAC7. Can activate the expression of TNFRSF18, IL2RA and CTLA4 and repress the expression of IL2 and IFNG via its association with transcription factor RUNX1. Inhibits the differentiation of IL17 producing helper T-cells (Th17) by antagonizing RORC function, leading to down-regulation of IL17 expression, favoring Treg development. Inhibits the transcriptional activator activity of RORA. Can repress the expression of IL2 and IFNG via its association with transcription factor IKZF4. The polypeptide is Forkhead box protein P3 (FOXP3) (Macaca fascicularis (Crab-eating macaque)).